Here is a 161-residue protein sequence, read N- to C-terminus: Epoxidase gkaX (161 aa).

An N-terminal signal peptide occupies residues 1 to 18; that stretch reads MSLSTSLRLLRLLPAISS. A glycan (N-linked (GlcNAc...) asparagine) is linked at asparagine 45. 3 helical membrane passes run 59 to 79, 92 to 112, and 139 to 159; these read WQWI…LNLV, IWYV…KMAL, and WVRA…AAVS.

This sequence belongs to the epoxidase xenD family.

The protein localises to the membrane. Its pathway is mycotoxin biosynthesis. Epoxidase; part of the gene cluster that mediates the biosynthesis of GKK1032, fungal natural products containing a macrocyclic para-cyclophane connected to a decahydrofluorene ring system that show potent antitumor activities. Within the pathway, gkaX functions synergistically with gkaB and gkaZ to form the cyclophane. The pathway begins with the PKS-NRPS gkaA which, with the help of the trans-enoyl reductase gkaC, synthesizes the polyketide-tyrosyl acyl thioester product which can be reductively off-loaded by the terminal reductase (R) domain in gkaA. The alpha/beta hydrolase gkaG is then required to catalyze the subsequent Knoevenagel condensation that affords the 3-pyrrolin-2-one ring, whereas the three proteins gkaB, gkaX and gkaZ then function synergistically to form the cyclophane. This chain is Epoxidase gkaX, found in Penicillium citrinum.